We begin with the raw amino-acid sequence, 528 residues long: Na(+)/H(+) antiporter NhaB (528 aa).

11 helical membrane passes run 23–45 (FAILSFLVINPVVFYLNPFVAGW), 66–86 (PGGLLAIEAVIIGMTSPSQVL), 95–115 (VLLLLIFMVAGIYFMKQLLLF), 139–159 (AFLSAFLDALTVIAVIIAVAV), 203–223 (LLMHAGVGTALGGVCTMVGEP), 241–261 (LRMSPVTVPVFVAGVLTCFLV), 310–330 (LIIGLAFHLASVGLIGLSVII), 349–369 (EEALPFTALLAVFFAIVGVII), 390–410 (LVIFYIAIGLLSMVSDNVFVG), 448–468 (ATPNGQAAFLFLLTSAIAPLI), and 476–496 (VWMALPYTIVLSIVGILAIQF).

This sequence belongs to the NhaB Na(+)/H(+) (TC 2.A.34) antiporter family.

It is found in the cell inner membrane. It carries out the reaction 2 Na(+)(in) + 3 H(+)(out) = 2 Na(+)(out) + 3 H(+)(in). Its function is as follows. Na(+)/H(+) antiporter that extrudes sodium in exchange for external protons. This is Na(+)/H(+) antiporter NhaB from Shewanella piezotolerans (strain WP3 / JCM 13877).